Reading from the N-terminus, the 1874-residue chain is Protein TIC 214 (1874 aa).

Helical transmembrane passes span isoleucine 18–glycine 38, phenylalanine 64–leucine 84, proline 87–histidine 107, leucine 124–leucine 144, valine 172–isoleucine 192, and isoleucine 221–isoleucine 241. Disordered regions lie at residues glutamate 248–valine 310 and lysine 1567–aspartate 1624. The span at glycine 255–threonine 268 shows a compositional bias: acidic residues. Basic and acidic residues-rich tracts occupy residues aspartate 298 to valine 310 and asparagine 1584 to alanine 1601.

It belongs to the TIC214 family. In terms of assembly, part of the Tic complex.

It is found in the plastid. The protein resides in the chloroplast inner membrane. Functionally, involved in protein precursor import into chloroplasts. May be part of an intermediate translocation complex acting as a protein-conducting channel at the inner envelope. The chain is Protein TIC 214 from Coffea arabica (Arabian coffee).